Consider the following 302-residue polypeptide: tRNA dimethylallyltransferase (302 aa).

10-17 is a binding site for ATP; it reads GPTATGKS. 12–17 lines the substrate pocket; that stretch reads TATGKS. Positions 35–38 are interaction with substrate tRNA; that stretch reads DSRQ.

The protein belongs to the IPP transferase family. Monomer. The cofactor is Mg(2+).

It catalyses the reaction adenosine(37) in tRNA + dimethylallyl diphosphate = N(6)-dimethylallyladenosine(37) in tRNA + diphosphate. In terms of biological role, catalyzes the transfer of a dimethylallyl group onto the adenine at position 37 in tRNAs that read codons beginning with uridine, leading to the formation of N6-(dimethylallyl)adenosine (i(6)A). This chain is tRNA dimethylallyltransferase, found in Acaryochloris marina (strain MBIC 11017).